The following is a 193-amino-acid chain: Interleukin-18-binding protein (193 aa).

An N-terminal signal peptide occupies residues 1–28 (MTMRHCWTAGPSSWWVLLLYVHVILARA). In terms of domain architecture, Ig-like C2-type spans 60–161 (PALDVIWPEK…QVAQYHIILA (102 aa)). N-linked (GlcNAc...) asparagine glycosylation is found at Asn74, Asn98, Asn120, and Asn142. Residues Cys81 and Cys145 are joined by a disulfide bond. Residues 172–185 (SPSQETLSSHSPVS) are compositionally biased toward polar residues. Residues 172-193 (SPSQETLSSHSPVSRSAGPGVA) are disordered.

It localises to the secreted. Its function is as follows. Binds to IL-18 and inhibits its activity. Functions as an inhibitor of the early TH1 cytokine response. This Mus musculus (Mouse) protein is Interleukin-18-binding protein (Il18bp).